Reading from the N-terminus, the 111-residue chain is Cytochrome b-c1 complex subunit 7 (111 aa).

The residue at position 2 (A2) is an N-acetylalanine. K12 bears the N6-acetyllysine; alternate mark. N6-succinyllysine; alternate is present on K12. K19 is modified (N6-acetyllysine). Residue K78 is modified to N6-acetyllysine; alternate. N6-succinyllysine; alternate is present on K78. K83 and K96 each carry N6-acetyllysine.

Belongs to the UQCRB/QCR7 family. In terms of assembly, component of the ubiquinol-cytochrome c oxidoreductase (cytochrome b-c1 complex, complex III, CIII), a multisubunit enzyme composed of 11 subunits. The complex is composed of 3 respiratory subunits cytochrome b, cytochrome c1 and Rieske protein UQCRFS1, 2 core protein subunits UQCRC1/QCR1 and UQCRC2/QCR2, and 6 low-molecular weight protein subunits UQCRH/QCR6, UQCRB/QCR7, UQCRQ/QCR8, UQCR10/QCR9, UQCR11/QCR10 and subunit 9, the cleavage product of Rieske protein UQCRFS1. The complex exists as an obligatory dimer and forms supercomplexes (SCs) in the inner mitochondrial membrane with NADH-ubiquinone oxidoreductase (complex I, CI) and cytochrome c oxidase (complex IV, CIV), resulting in different assemblies (supercomplex SCI(1)III(2)IV(1) and megacomplex MCI(2)III(2)IV(2)).

It is found in the mitochondrion inner membrane. Its function is as follows. Component of the ubiquinol-cytochrome c oxidoreductase, a multisubunit transmembrane complex that is part of the mitochondrial electron transport chain which drives oxidative phosphorylation. The respiratory chain contains 3 multisubunit complexes succinate dehydrogenase (complex II, CII), ubiquinol-cytochrome c oxidoreductase (cytochrome b-c1 complex, complex III, CIII) and cytochrome c oxidase (complex IV, CIV), that cooperate to transfer electrons derived from NADH and succinate to molecular oxygen, creating an electrochemical gradient over the inner membrane that drives transmembrane transport and the ATP synthase. The cytochrome b-c1 complex catalyzes electron transfer from ubiquinol to cytochrome c, linking this redox reaction to translocation of protons across the mitochondrial inner membrane, with protons being carried across the membrane as hydrogens on the quinol. In the process called Q cycle, 2 protons are consumed from the matrix, 4 protons are released into the intermembrane space and 2 electrons are passed to cytochrome c. The polypeptide is Cytochrome b-c1 complex subunit 7 (UQCRB) (Homo sapiens (Human)).